The sequence spans 432 residues: Trigger factor (432 aa).

In terms of domain architecture, PPIase FKBP-type spans 161-246; the sequence is GTRATINFVG…VVKVEARELP (86 aa).

The protein belongs to the FKBP-type PPIase family. Tig subfamily.

It localises to the cytoplasm. It carries out the reaction [protein]-peptidylproline (omega=180) = [protein]-peptidylproline (omega=0). Its function is as follows. Involved in protein export. Acts as a chaperone by maintaining the newly synthesized protein in an open conformation. Functions as a peptidyl-prolyl cis-trans isomerase. This is Trigger factor from Aliivibrio fischeri (strain MJ11) (Vibrio fischeri).